Consider the following 250-residue polypeptide: MTAVRDPFFPADQSIRASHNPIEVRELGMMDYQRAWDLQAELNKQRQHDEINDVILVLEHPSIYTAGKRTQPSDRPQNGLPVIDVDRGGRITWHGPGQLVMYPIIKLAEPIDVVDYVRRVEEALIHVIRTHGIPNAGRIDGRSGVWVPGKTPEEHRKVAALGIRIAGGVTMHGLALNCDNTVEFYDYIVPCGISDAGVTTMSQEVGNDVTTQSMTAPLLAALDDAFAGRLVVADHSFASAPDPTKIPRRP.

Positions 49 to 230 constitute a BPL/LPL catalytic domain; the sequence is DEINDVILVL…ALDDAFAGRL (182 aa). Substrate-binding positions include 87 to 94, 160 to 162, and 173 to 175; these read RGGRITWH, ALG, and GLA. C191 serves as the catalytic Acyl-thioester intermediate.

It belongs to the LipB family.

The protein resides in the cytoplasm. It carries out the reaction octanoyl-[ACP] + L-lysyl-[protein] = N(6)-octanoyl-L-lysyl-[protein] + holo-[ACP] + H(+). Its pathway is protein modification; protein lipoylation via endogenous pathway; protein N(6)-(lipoyl)lysine from octanoyl-[acyl-carrier-protein]: step 1/2. Its function is as follows. Catalyzes the transfer of endogenously produced octanoic acid from octanoyl-acyl-carrier-protein onto the lipoyl domains of lipoate-dependent enzymes. Lipoyl-ACP can also act as a substrate although octanoyl-ACP is likely to be the physiological substrate. This Corynebacterium diphtheriae (strain ATCC 700971 / NCTC 13129 / Biotype gravis) protein is Octanoyltransferase.